The chain runs to 104 residues: Large ribosomal subunit protein uL23 (104 aa).

The protein belongs to the universal ribosomal protein uL23 family. Part of the 50S ribosomal subunit. Contacts protein L29, and trigger factor when it is bound to the ribosome.

Its function is as follows. One of the early assembly proteins it binds 23S rRNA. One of the proteins that surrounds the polypeptide exit tunnel on the outside of the ribosome. Forms the main docking site for trigger factor binding to the ribosome. This is Large ribosomal subunit protein uL23 from Nostoc sp. (strain PCC 7120 / SAG 25.82 / UTEX 2576).